A 285-amino-acid polypeptide reads, in one-letter code: Hypersensitive-induced response protein 3 (285 aa).

A lipid anchor (N-myristoyl glycine) is attached at Gly2. 2 coiled-coil regions span residues 113–139 (NLDD…MTAY) and 165–185 (NAAA…KIIQ).

As to quaternary structure, self-interacts and forms heteromers. Interacts with NB-LRR class of R proteins before R proteins (e.g. RPS2 or RPM1) are activated by the effectors.

Its subcellular location is the cell membrane. This Arabidopsis thaliana (Mouse-ear cress) protein is Hypersensitive-induced response protein 3 (HIR3).